The primary structure comprises 155 residues: Microsomal glutathione S-transferase 1 (155 aa).

Residues 3-9 (NLSQLME) lie on the Lumenal side of the membrane. A helical membrane pass occupies residues 10 to 33 (NEVFMAFASYTTIVLSKMNFMSTA). Topologically, residues 34–62 (TAFYRLTKKVFANPEDCAGFGKGENAKKY) are cytoplasmic. Position 38 (Arg-38) interacts with glutathione. An N6-acetyllysine mark is found at Lys-42, Lys-55, and Lys-60. Residues 63–96 (LRTDDRVERVRRAHLNDLENIVPFLGIGLLYSLS) form a helical membrane-spanning segment. Glutathione is bound by residues Arg-73, Arg-74, His-76, and Glu-81. The Lumenal segment spans residues 97–99 (GPD). The chain crosses the membrane as a helical span at residues 100 to 123 (LSTAILHFRLFVRARIYHTIAYLT). Tyr-121 contributes to the glutathione binding site. Over 124–128 (PLPQP) the chain is Cytoplasmic. Residues 129–148 (NRALAFFIGYGVTLSMAYRL) traverse the membrane as a helical segment. The Lumenal segment spans residues 149-155 (LKSKLYL).

This sequence belongs to the MAPEG family. In terms of assembly, homotrimer; The trimer binds only one molecule of glutathione.

The protein localises to the endoplasmic reticulum membrane. It is found in the mitochondrion outer membrane. The enzyme catalyses RX + glutathione = an S-substituted glutathione + a halide anion + H(+). Conjugation of reduced glutathione to a wide number of exogenous and endogenous hydrophobic electrophiles. The chain is Microsomal glutathione S-transferase 1 (MGST1) from Bos taurus (Bovine).